Reading from the N-terminus, the 159-residue chain is Large ribosomal subunit protein uL15 (159 aa).

Positions 21 to 34 are enriched in basic residues; it reads LRPAPGAHKSKIRV. The disordered stretch occupies residues 21–55; that stretch reads LRPAPGAHKSKIRVGRGEGSKGKTAGRGTKGSKAR.

It belongs to the universal ribosomal protein uL15 family. Part of the 50S ribosomal subunit.

Functionally, binds to the 23S rRNA. In Frankia casuarinae (strain DSM 45818 / CECT 9043 / HFP020203 / CcI3), this protein is Large ribosomal subunit protein uL15.